The following is a 107-amino-acid chain: Large ribosomal subunit protein P1 (107 aa).

Residues 68-82 (PATAGAPAAAGAAAP) are compositionally biased toward low complexity. The disordered stretch occupies residues 68–107 (PATAGAPAAAGAAAPAEEKKEEKEEEKEESDEDMGFGLFD). Over residues 90–101 (KEEEKEESDEDM) the composition is skewed to acidic residues.

Belongs to the eukaryotic ribosomal protein P1/P2 family. P1 and P2 exist as dimers at the large ribosomal subunit.

The protein localises to the cytoplasm. Its function is as follows. Plays an important role in the elongation step of protein synthesis. The chain is Large ribosomal subunit protein P1 from Penicillium brevicompactum.